Reading from the N-terminus, the 737-residue chain is Catalase-peroxidase (737 aa).

Residues 102–225 (WHSAGTYRTG…LGAVQMGLIY (124 aa)) constitute a cross-link (tryptophyl-tyrosyl-methioninium (Trp-Tyr) (with M-251)). The Proton acceptor role is filled by histidine 103. Positions 225 to 251 (YVNPEGPNGKPDPLAAAHDIRETFARM) form a cross-link, tryptophyl-tyrosyl-methioninium (Tyr-Met) (with W-102). Histidine 266 contacts heme b.

Belongs to the peroxidase family. Peroxidase/catalase subfamily. As to quaternary structure, homodimer or homotetramer. Heme b serves as cofactor. In terms of processing, formation of the three residue Trp-Tyr-Met cross-link is important for the catalase, but not the peroxidase activity of the enzyme.

The catalysed reaction is H2O2 + AH2 = A + 2 H2O. The enzyme catalyses 2 H2O2 = O2 + 2 H2O. Its function is as follows. Bifunctional enzyme with both catalase and broad-spectrum peroxidase activity. The protein is Catalase-peroxidase of Caulobacter sp. (strain K31).